Here is a 952-residue protein sequence, read N- to C-terminus: Plasma membrane ATPase 4 (952 aa).

Topologically, residues 1 to 64 (MAKAISLEEI…EKNESKILKF (64 aa)) are cytoplasmic. The chain crosses the membrane as a helical span at residues 65-84 (LGFMWNPLSWVMEAAAVMAI). Over 85 to 96 (ALANGDGKPPDW) the chain is Extracellular. A helical membrane pass occupies residues 97–117 (QDFIGIICLLVINSTISFIEE). At 118–246 (NNAGNAAAAL…GHFQKVLTAI (129 aa)) the chain is on the cytoplasmic side. A helical transmembrane segment spans residues 247–267 (GNFCICSIAIGMLVEIIVMYP). Over 268–277 (IQHRKYRDGI) the chain is Extracellular. The chain crosses the membrane as a helical span at residues 278–299 (DNLLVLLIGGIPIAMPTVLSVT). Residues 300–646 (MAIGSHRLSQ…TSRAIFQRMK (347 aa)) are Cytoplasmic-facing. The active-site 4-aspartylphosphate intermediate is aspartate 332. Positions 591 and 595 each coordinate Mg(2+). The chain crosses the membrane as a helical span at residues 647–668 (NYTIYAVSITIRIVFGFMFIAL). Over 669 to 673 (IWKYD) the chain is Extracellular. A helical membrane pass occupies residues 674-696 (FSAFMVLIIAILNDGTIMTISKD). The Cytoplasmic segment spans residues 697–712 (RVKPSPMPDSWKLKEI). Residues 713–733 (FATGVVLGGYQALMTVVFFWA) form a helical membrane-spanning segment. Topologically, residues 734–754 (MHDTDFFSDKFGVKSLRNSDE) are extracellular. The chain crosses the membrane as a helical span at residues 755 to 775 (EMMSALYLQVSIISQALIFVT). At 776–787 (RSRSWSFLERPG) the chain is on the cytoplasmic side. Residues 788–808 (MLLVIAFMIAQLVATLIAVYA) form a helical membrane-spanning segment. Residues 809 to 817 (NWAFARVKG) are Extracellular-facing. A helical membrane pass occupies residues 818-838 (CGWGWAGVIWLYSIIFYLPLD). Topologically, residues 839 to 952 (IMKFAIRYIL…IETIQQHYTV (114 aa)) are cytoplasmic.

This sequence belongs to the cation transport ATPase (P-type) (TC 3.A.3) family. Type IIIA subfamily. As to expression, expressed at high levels in root, stem, leaf and flower.

The protein resides in the cell membrane. It carries out the reaction ATP + H2O + H(+)(in) = ADP + phosphate + 2 H(+)(out). The plasma membrane ATPase of plants and fungi is a hydrogen ion pump. The proton gradient it generates drives the active transport of nutrients by H(+)-symport. The resulting external acidification and/or internal alkinization may mediate growth responses. The chain is Plasma membrane ATPase 4 (PMA4) from Nicotiana plumbaginifolia (Leadwort-leaved tobacco).